A 101-amino-acid polypeptide reads, in one-letter code: NAD(P)H-quinone oxidoreductase subunit 4L, chloroplastic (101 aa).

The next 3 helical transmembrane spans lie at 2–22 (MLEY…YGLI), 32–52 (MCLE…SYFF), and 61–81 (IFSI…LAIV).

This sequence belongs to the complex I subunit 4L family. In terms of assembly, NDH is composed of at least 16 different subunits, 5 of which are encoded in the nucleus.

Its subcellular location is the plastid. The protein resides in the chloroplast thylakoid membrane. It carries out the reaction a plastoquinone + NADH + (n+1) H(+)(in) = a plastoquinol + NAD(+) + n H(+)(out). It catalyses the reaction a plastoquinone + NADPH + (n+1) H(+)(in) = a plastoquinol + NADP(+) + n H(+)(out). NDH shuttles electrons from NAD(P)H:plastoquinone, via FMN and iron-sulfur (Fe-S) centers, to quinones in the photosynthetic chain and possibly in a chloroplast respiratory chain. The immediate electron acceptor for the enzyme in this species is believed to be plastoquinone. Couples the redox reaction to proton translocation, and thus conserves the redox energy in a proton gradient. In Ipomoea purpurea (Common morning glory), this protein is NAD(P)H-quinone oxidoreductase subunit 4L, chloroplastic.